The primary structure comprises 274 residues: Undecaprenyl-diphosphatase (274 aa).

The next 7 membrane-spanning stretches (helical) occupy residues 21-39, 44-64, 85-105, 109-129, 185-205, 214-234, and 247-267; these read FLPI…LLGF, AQVF…LVYW, FNLA…GKAI, LFTP…ILWA, ATDF…VYSL, VADL…AWLC, and FVPF…TAST.

This sequence belongs to the UppP family.

The protein resides in the cell inner membrane. The catalysed reaction is di-trans,octa-cis-undecaprenyl diphosphate + H2O = di-trans,octa-cis-undecaprenyl phosphate + phosphate + H(+). In terms of biological role, catalyzes the dephosphorylation of undecaprenyl diphosphate (UPP). Confers resistance to bacitracin. The sequence is that of Undecaprenyl-diphosphatase from Verminephrobacter eiseniae (strain EF01-2).